The following is a 338-amino-acid chain: Ketol-acid reductoisomerase (NADP(+)) (338 aa).

The 181-residue stretch at 2–182 (TKMYYEKDTD…GGARAGVLET (181 aa)) folds into the KARI N-terminal Rossmann domain. NADP(+) contacts are provided by residues 25 to 28 (YGSQ), Ser-51, Ser-53, and 83 to 86 (DELQ). His-108 is a catalytic residue. Gly-134 is a binding site for NADP(+). Residues 183–330 (TFRTETETDL…SEIRKLYCWN (148 aa)) enclose the KARI C-terminal knotted domain. Residues Asp-191, Glu-195, Glu-227, and Glu-231 each contribute to the Mg(2+) site. Ser-252 contacts substrate.

Belongs to the ketol-acid reductoisomerase family. Mg(2+) is required as a cofactor.

It carries out the reaction (2R)-2,3-dihydroxy-3-methylbutanoate + NADP(+) = (2S)-2-acetolactate + NADPH + H(+). The catalysed reaction is (2R,3R)-2,3-dihydroxy-3-methylpentanoate + NADP(+) = (S)-2-ethyl-2-hydroxy-3-oxobutanoate + NADPH + H(+). It participates in amino-acid biosynthesis; L-isoleucine biosynthesis; L-isoleucine from 2-oxobutanoate: step 2/4. It functions in the pathway amino-acid biosynthesis; L-valine biosynthesis; L-valine from pyruvate: step 2/4. Functionally, involved in the biosynthesis of branched-chain amino acids (BCAA). Catalyzes an alkyl-migration followed by a ketol-acid reduction of (S)-2-acetolactate (S2AL) to yield (R)-2,3-dihydroxy-isovalerate. In the isomerase reaction, S2AL is rearranged via a Mg-dependent methyl migration to produce 3-hydroxy-3-methyl-2-ketobutyrate (HMKB). In the reductase reaction, this 2-ketoacid undergoes a metal-dependent reduction by NADPH to yield (R)-2,3-dihydroxy-isovalerate. This is Ketol-acid reductoisomerase (NADP(+)) from Clostridium botulinum (strain Alaska E43 / Type E3).